The sequence spans 503 residues: Probable cytosol aminopeptidase (503 aa).

Mn(2+) contacts are provided by Lys-274 and Asp-279. Residue Lys-286 is part of the active site. Positions 297, 356, and 358 each coordinate Mn(2+). The active site involves Arg-360.

Belongs to the peptidase M17 family. Mn(2+) serves as cofactor.

It localises to the cytoplasm. It carries out the reaction Release of an N-terminal amino acid, Xaa-|-Yaa-, in which Xaa is preferably Leu, but may be other amino acids including Pro although not Arg or Lys, and Yaa may be Pro. Amino acid amides and methyl esters are also readily hydrolyzed, but rates on arylamides are exceedingly low.. The enzyme catalyses Release of an N-terminal amino acid, preferentially leucine, but not glutamic or aspartic acids.. In terms of biological role, presumably involved in the processing and regular turnover of intracellular proteins. Catalyzes the removal of unsubstituted N-terminal amino acids from various peptides. The polypeptide is Probable cytosol aminopeptidase (Paraburkholderia phymatum (strain DSM 17167 / CIP 108236 / LMG 21445 / STM815) (Burkholderia phymatum)).